Here is a 384-residue protein sequence, read N- to C-terminus: MAAQNGNTSFTPNFNPPQDHASSLSFNFSYGDYDLPMDEDEDMTKTRTFFAAKIVIGIALAGIMLVCGIGNFVFIAALTRYKKLRNLTNLLIANLAISDFLVAIICCPFEMDYYVVRQLSWEHGHVLCASVNYLRTVSLYVSTNALLAIAIDRYLAIVHPLKPRMNYQTASFLIALVWMVSILIAIPSAYFATETVLFIVKSQEKIFCGQIWPVDQQLYYKSYFLFIFGVEFVGPVVTMTLCYARISRELWFKAVPGFQTEQIRKRLRCRRKTVLVLMCILTAYVLCWAPFYGFTIVRDFFPTVFVKEKHYLTAFYVVECIAMSNSMINTVCFVTVKNNTMKYFKKMMLLHWRPSQRGSKSSADLDLRTNGVPTTEEVDCIRLK.

At Met1–Ile54 the chain is on the extracellular side. Asn7 and Asn27 each carry an N-linked (GlcNAc...) asparagine glycan. The helical transmembrane segment at Val55 to Ile75 threads the bilayer. Residues Ala76–Asn89 lie on the Cytoplasmic side of the membrane. The chain crosses the membrane as a helical span at residues Leu90 to Glu110. Topologically, residues Met111–Thr136 are extracellular. Cys128 and Cys208 are oxidised to a cystine. The helical transmembrane segment at Val137–Ile157 threads the bilayer. Residues Val158 to Ser171 are Cytoplasmic-facing. Residues Phe172–Ala192 traverse the membrane as a helical segment. Residues Thr193–Tyr223 lie on the Extracellular side of the membrane. Residues Phe224–Ala244 traverse the membrane as a helical segment. At Arg245–Thr273 the chain is on the cytoplasmic side. The helical transmembrane segment at Val274–Phe294 threads the bilayer. Over Thr295 to Thr313 the chain is Extracellular. The helical transmembrane segment at Ala314–Val334 threads the bilayer. The Cytoplasmic portion of the chain corresponds to Thr335–Lys384.

This sequence belongs to the G-protein coupled receptor 1 family. As to quaternary structure, homodimer. In terms of tissue distribution, expressed in the ileocecum, thyroid gland, pituitary gland, salivary gland, adrenal gland, testis, ovary and brain.

The protein localises to the cell membrane. Its function is as follows. Receptor for prokineticin 2. Exclusively coupled to the G(q) subclass of heteromeric G proteins. Activation leads to mobilization of calcium, stimulation of phosphoinositide turnover and activation of p44/p42 mitogen-activated protein kinase. This is Prokineticin receptor 2 (PROKR2) from Homo sapiens (Human).